Consider the following 528-residue polypeptide: Na(+)/H(+) antiporter NhaB (528 aa).

A run of 10 helical transmembrane segments spans residues 20-39 (WFKIAIISFLVINPIVFYFN), 66-86 (PGGLLAIEAVAIGMTSPSQVL), 97-117 (LLLVFMVAGIYFMKQLLLFVF), 139-159 (AFLSAFLDALTVIAVIITVAV), 241-261 (IRMSPVTVPVFFAGITTCFLV), 304-324 (AVIGVWLIAGLALHLASVGLI), 349-369 (EEALPFTALLAVFFAIVAVII), 390-410 (LVIFYIANGLLSMVSDNVFVG), 448-468 (ATPNGQAAFLFLLTSAIAPLI), and 476-496 (VWMALPYTIVLSIVGVLAIQL).

It belongs to the NhaB Na(+)/H(+) (TC 2.A.34) antiporter family.

Its subcellular location is the cell inner membrane. It catalyses the reaction 2 Na(+)(in) + 3 H(+)(out) = 2 Na(+)(out) + 3 H(+)(in). Functionally, na(+)/H(+) antiporter that extrudes sodium in exchange for external protons. This is Na(+)/H(+) antiporter NhaB from Shewanella pealeana (strain ATCC 700345 / ANG-SQ1).